We begin with the raw amino-acid sequence, 246 residues long: NAD-dependent protein deacetylase (246 aa).

The region spanning 1–246 (MKMKEFLDLL…RRVMEEGGIS (246 aa)) is the Deacetylase sirtuin-type domain. Positions 22, 26, 33, 34, 98, 100, 101, and 116 each coordinate NAD(+). Phenylalanine 33 lines the nicotinamide pocket. Residues isoleucine 100 and aspartate 101 each coordinate nicotinamide. Histidine 116 functions as the Proton acceptor in the catalytic mechanism. Zn(2+) is bound by residues cysteine 124, cysteine 127, cysteine 148, and cysteine 151. Serine 189, serine 190, asparagine 214, leucine 215, glycine 216, aspartate 231, and valine 232 together coordinate NAD(+).

It belongs to the sirtuin family. Class U subfamily. It depends on Zn(2+) as a cofactor.

The protein localises to the cytoplasm. It catalyses the reaction N(6)-acetyl-L-lysyl-[protein] + NAD(+) + H2O = 2''-O-acetyl-ADP-D-ribose + nicotinamide + L-lysyl-[protein]. Its activity is regulated as follows. Non-competitively inhibited by nicotinamide in vitro and in vivo, but not by nicotinic acid. Nicotinamide inhibits the deacetylation activity by reacting with a reaction intermediate. Its function is as follows. NAD-dependent protein deacetylase which modulates the activities of several enzymes which are inactive in their acetylated form. Also has depropionylation activity in vitro. Also able to ADP-ribosylate peptide substrates with Arg or Lys in the +2 position. The role of this function in vivo is not clear. This Thermotoga maritima (strain ATCC 43589 / DSM 3109 / JCM 10099 / NBRC 100826 / MSB8) protein is NAD-dependent protein deacetylase.